A 456-amino-acid chain; its full sequence is Senecionine N-oxygenase (456 aa).

A signal peptide spans 1-22 (MFRKFVIMLVLSLLVAAGISQA). Position 32-37 (32-37 (GAGYSG)) interacts with FAD. 215–220 (GAGPSG) provides a ligand contact to NADP(+).

It belongs to the FMO family. As to quaternary structure, homotetramer. FAD serves as cofactor. Hemolymph.

Its subcellular location is the secreted. It carries out the reaction senecionine + NADPH + O2 = senecionine N-oxide + NADP(+) + H2O. Functionally, NADPH-dependent monooxygenase that detoxifies senecionine and similar plant alkaloids that are ingested by the larvae. Is active towards a narrow range of related substrates with highest activity towards senecionine, followed by seneciphylline, retrorsine, monocrotaline, senecivernine, axillarine and axillaridine. The sequence is that of Senecionine N-oxygenase (sno1) from Tyria jacobaeae (Cinnabar moth).